Reading from the N-terminus, the 407-residue chain is Prolyl hydroxylase EGLN2 (407 aa).

Low complexity-rich tracts occupy residues 1–24 (MDSP…SSEP) and 57–75 (ASAG…TASP). 3 disordered regions span residues 1-34 (MDSP…RARM), 50-89 (CPGV…GELR), and 108-157 (AAQG…CSSG). The Bipartite nuclear localization signal signature appears at 89–134 (RPLQSEGAAALVTKGCQRLAAQGARPEAPKRKWAEDGGDAPSPSKR). The residue at position 130 (serine 130) is a Phosphoserine. The beta(2)beta(3) 'finger-like' loop stretch occupies residues 225 to 235 (VSQRAIPPRSI). Residues 278-376 (GRTKAMVACY…RYAITVWYFD (99 aa)) enclose the Fe2OG dioxygenase domain. Fe cation contacts are provided by histidine 297, aspartate 299, and histidine 358. Arginine 367 is a 2-oxoglutarate binding site.

In terms of assembly, interacts (preferably isoform p40) with SIAH2; the interaction targets both SIAH2 isoforms for proteasomal degradation in vitro. Interacts with LIMD1, WTIP and AJUBA. Fe(2+) is required as a cofactor. L-ascorbate serves as cofactor. Ubiquitinated by SIAH1 and/or SIAH2 in response to the unfolded protein response (UPR), leading to its degradation. Expressed in adult and fetal heart, brain, liver, lung, skeletal muscle, and kidney. Also expressed in testis and placenta. Highest levels in adult brain, placenta, lung, kidney, and testis. Expressed in hormone responsive tissues, including normal and cancerous mammary, ovarian and prostate epithelium.

It localises to the nucleus. The enzyme catalyses L-prolyl-[protein] + 2-oxoglutarate + O2 = trans-4-hydroxy-L-prolyl-[protein] + succinate + CO2. It catalyses the reaction L-prolyl-[hypoxia-inducible factor alpha subunit] + 2-oxoglutarate + O2 = trans-4-hydroxy-L-prolyl-[hypoxia-inducible factor alpha subunit] + succinate + CO2. Its function is as follows. Prolyl hydroxylase that mediates hydroxylation of proline residues in target proteins, such as ATF4, IKBKB, CEP192 and HIF1A. Target proteins are preferentially recognized via a LXXLAP motif. Cellular oxygen sensor that catalyzes, under normoxic conditions, the post-translational formation of 4-hydroxyproline in hypoxia-inducible factor (HIF) alpha proteins. Hydroxylates a specific proline found in each of the oxygen-dependent degradation (ODD) domains (N-terminal, NODD, and C-terminal, CODD) of HIF1A. Also hydroxylates HIF2A. Has a preference for the CODD site for both HIF1A and HIF2A. Hydroxylated HIFs are then targeted for proteasomal degradation via the von Hippel-Lindau ubiquitination complex. Under hypoxic conditions, the hydroxylation reaction is attenuated allowing HIFs to escape degradation resulting in their translocation to the nucleus, heterodimerization with HIF1B, and increased expression of hypoxy-inducible genes. EGLN2 is involved in regulating hypoxia tolerance and apoptosis in cardiac and skeletal muscle. Also regulates susceptibility to normoxic oxidative neuronal death. Links oxygen sensing to cell cycle and primary cilia formation by hydroxylating the critical centrosome component CEP192 which promotes its ubiquitination and subsequent proteasomal degradation. Hydroxylates IKBKB, mediating NF-kappa-B activation in hypoxic conditions. Also mediates hydroxylation of ATF4, leading to decreased protein stability of ATF4. The protein is Prolyl hydroxylase EGLN2 of Homo sapiens (Human).